The primary structure comprises 305 residues: MIKQRTLKQSIKVTGVGLHSGEKVTLTLRPAMPNTGVVYYRTDLNPTVAFPADPNSVRDTMLCTALINEQGVRISTVEHLNAALAGLGIDNIIIEVDAPEIPIMDGSASPFIYLLLDAGIEEQNAAKKFIRIKEYVRVEDGDKWAEFKPYNGFRLDFTIDFDHPAIGKDVRNYEMNFSAQAFVHQISRARTFGFMKDIEYLQSQGLVLGGSLDNAIVLDDYRILNEDGLRFKDELVRHKMLDAIGDLYMAGYNIIGDFKAYKSGHGLNNKLLRAVLANQEAWEFVTFEDKEQVPQGYVAPVQVLI.

Zn(2+)-binding residues include histidine 79, histidine 238, and aspartate 242. Residue histidine 265 is the Proton donor of the active site.

This sequence belongs to the LpxC family. The cofactor is Zn(2+).

The catalysed reaction is a UDP-3-O-[(3R)-3-hydroxyacyl]-N-acetyl-alpha-D-glucosamine + H2O = a UDP-3-O-[(3R)-3-hydroxyacyl]-alpha-D-glucosamine + acetate. It participates in glycolipid biosynthesis; lipid IV(A) biosynthesis; lipid IV(A) from (3R)-3-hydroxytetradecanoyl-[acyl-carrier-protein] and UDP-N-acetyl-alpha-D-glucosamine: step 2/6. In terms of biological role, catalyzes the hydrolysis of UDP-3-O-myristoyl-N-acetylglucosamine to form UDP-3-O-myristoylglucosamine and acetate, the committed step in lipid A biosynthesis. This Haemophilus influenzae (strain PittGG) protein is UDP-3-O-acyl-N-acetylglucosamine deacetylase.